The primary structure comprises 551 residues: Cytochrome P450 monooxygenase FCK2 (551 aa).

A run of 3 helical transmembrane segments spans residues Phe8–Phe28, Leu35–Val55, and Val69–Leu89. Asn258 carries an N-linked (GlcNAc...) asparagine glycan. Residue Cys493 participates in heme binding.

Belongs to the cytochrome P450 family. Requires heme as cofactor.

It is found in the membrane. Its pathway is secondary metabolite biosynthesis. Its function is as follows. Cytochrome P450 monooxygenase; part of the gene cluster that mediates the biosynthesis of cytokinins such as fusatin, fusatinic acids or 8-oxofusatin, known for their growth promoting and anti-senescence activities toward host plants. FCK1 is a bifunctional enzyme that performs the first steps in the biosynthesis of Fusarium cytokinins. It first condenses adenosine monophosphate (AMP) with dimethylallyl diphosphate (DMAPP) to yield isoprenyl adenosine monophosphate. It then catalyzes the removal of the phosphoribose to produce isopentenylaldehyde. The cytochrome P450 monooxygenase then converts isopentenylaldehyde to trans-zeatin. A condensation step converts trans-zeatin to fusatin which is further modified to produce fusatinic acid. The mechanism for oxidation of fusatin to fusatinic acid remains unknown. 8-oxofusatin could be produced through several pathways, via direct oxygenation of fusatin, or via the 8-oxo-pentenyladenine intermediate which itself must arise from either the prenylation of 8-oxo-AMP by FCK1 and/or oxygenation of isopentenylaldehyde. Both the FCK3 and FCK4 enzymes act downstream of the identified cytokinins to produce yet unidentified compounds. In Fusarium pseudograminearum (strain CS3096) (Wheat and barley crown-rot fungus), this protein is Cytochrome P450 monooxygenase FCK2.